Here is a 75-residue protein sequence, read N- to C-terminus: Dermaseptin-S11 (75 aa).

A signal peptide spans 1–22; that stretch reads MAFLKKSLFLVLFLGMVSLSIC. Positions 23 to 45 are excised as a propeptide; the sequence is EEEKRENEDEEEQEDDEQSEEKR. Residues 25–44 are disordered; it reads EKRENEDEEEQEDDEQSEEK. Positions 30 to 41 are enriched in acidic residues; the sequence is EDEEEQEDDEQS.

Belongs to the frog skin active peptide (FSAP) family. Dermaseptin subfamily. In terms of tissue distribution, expressed by the skin glands.

It is found in the secreted. It localises to the target cell membrane. Its function is as follows. Antimicrobial peptide with activity against Gram-positive and Gram-negative bacteria, and fungi. Has hemolytic activity. The sequence is that of Dermaseptin-S11 from Phyllomedusa sauvagei (Sauvage's leaf frog).